The primary structure comprises 64 residues: Temporin-ALe (64 aa).

The signal sequence occupies residues 1 to 22 (MFTLKKSLLLLFFLGTINLSLC). A propeptide spanning residues 23 to 47 (EQERNAEEERRDEPDERNAEVEKRF) is cleaved from the precursor. Position 62 is a leucine amide (Leu62).

As to expression, expressed by the skin glands.

It localises to the secreted. Its function is as follows. Antimicrobial peptide with activity against Gram-positive and Gram-negative bacteria and against fungi. Has been tested against S.aureus (MIC=1.25 ug/mL), B.pumilus (MIC=5.0 ug/mL), B.cereus (MIC=15.0 ug/mL), E.coli (MIC=1.25 ug/mL), B.dysenteriae (MIC=5.0 ug/mL), A.cacoaceticus (MIC=15.0 ug/mL), P.aeruginosa (MIC=5.0 ug/mL) and C.albicans (MIC=1.25 ug/mL). Also shows a weak hemolytic activity. This is Temporin-ALe from Amolops loloensis (Lolokou Sucker Frog).